Reading from the N-terminus, the 1366-residue chain is DNA-directed RNA polymerase subunit beta' (1366 aa).

Basic residues predominate over residues 1 to 20 (MTSSKPKKTSRVRKTTKNSK). Positions 1 to 34 (MTSSKPKKTSRVRKTTKNSKKNNPLTMPALAKTP) are disordered. Residues cysteine 248, cysteine 315, cysteine 322, and cysteine 325 each contribute to the Zn(2+) site. Residues 1291–1366 (YTVDMPQSPS…LQEEGLLSDE (76 aa)) are disordered. Residues 1295 to 1305 (MPQSPSVSSTA) show a composition bias toward polar residues. The segment covering 1354-1366 (LEGLQEEGLLSDE) has biased composition (low complexity).

This sequence belongs to the RNA polymerase beta' chain family. RpoC2 subfamily. In terms of assembly, in cyanobacteria the RNAP catalytic core is composed of 2 alpha, 1 beta, 1 beta', 1 gamma and 1 omega subunit. When a sigma factor is associated with the core the holoenzyme is formed, which can initiate transcription. The cofactor is Zn(2+).

It catalyses the reaction RNA(n) + a ribonucleoside 5'-triphosphate = RNA(n+1) + diphosphate. Functionally, DNA-dependent RNA polymerase catalyzes the transcription of DNA into RNA using the four ribonucleoside triphosphates as substrates. This chain is DNA-directed RNA polymerase subunit beta', found in Prochlorococcus marinus (strain MIT 9301).